Reading from the N-terminus, the 228-residue chain is MLVHIPEVLSRDQVRHCRELMARADWVDGRITAGHQSAQVKRNLQLPEGTPEARELSELVHGALSRHPLFMSAALPKTIFPPLFNRYDADGEMNFGSHVDNAIRTVPGTGVRVRTDVSSTLFLSDPDEYDGGELVVEDTYGSHAAKLPAGDMVVYPGTSLHHVTKVTRGSRIASFFWTQSLIADVTRRAMMFDLDMSIIRLNADHPDHPSVLSLTGLYHNLLRQWAEV.

One can recognise a Fe2OG dioxygenase domain in the interval 78–180 (TIFPPLFNRY…RIASFFWTQS (103 aa)). Fe cation-binding residues include His98, Asp100, and His161. Residue Arg171 participates in 2-oxoglutarate binding.

Requires Fe(2+) as cofactor. The cofactor is L-ascorbate.

The chain is PKHD-type hydroxylase RPE_4577 from Rhodopseudomonas palustris (strain BisA53).